The sequence spans 348 residues: Actin maturation protease (348 aa).

The span at methionine 1–threonine 18 shows a compositional bias: pro residues. Residues methionine 1–phenylalanine 64 form a disordered region. The segment covering asparagine 34–serine 48 has biased composition (low complexity). The span at valine 49 to arginine 60 shows a compositional bias: pro residues. A peptidase C39-like region spans residues serine 121–glycine 241. Residue cysteine 129 is part of the active site. The residue at position 313 (serine 313) is a Phosphoserine.

The protein belongs to the ACTMAP family. Interacts (via N-terminus) with PFN2; the interaction may facilitate efficient cleavage of the acetylated N-terminus of immature actin. Interacts with PFN1.

The protein localises to the cytoplasm. The catalysed reaction is N-terminal N(alpha)-acetyl-L-methionyl-L-aspartyl-[protein] + H2O = N-terminal L-aspartyl-[protein] + N-acetyl-L-methionine. It carries out the reaction N-terminal N(alpha)-acetyl-L-methionyl-L-glutamyl-[protein] + H2O = N-terminal L-glutamyl-[protein] + N-acetyl-L-methionine. The enzyme catalyses N-terminal N(alpha)-acetyl-L-cysteinyl-L-aspartyl-[protein] + H2O = N-terminal L-aspartyl-[protein] + N-acetyl-L-cysteine. It catalyses the reaction N-terminal N(alpha)-acetyl-L-cysteinyl-L-glutamyl-[protein] + H2O = N-terminal L-glutamyl-[protein] + N-acetyl-L-cysteine. In terms of biological role, actin maturation protease that specifically mediates the cleavage of immature acetylated N-terminal actin, thereby contributing to actin maturation. Cleaves N-terminal acetylated methionine of immature cytoplasmic beta- and gamma-actins ACTB and ACTG1 after translation. Cleaves N-terminal acetylated cysteine of muscle alpha-actins ACTA1, ACTC1 and ACTA2 after canonical removal of N-terminal methionine. The polypeptide is Actin maturation protease (Bos taurus (Bovine)).